Consider the following 125-residue polypeptide: Large ribosomal subunit protein bL12 (125 aa).

The protein belongs to the bacterial ribosomal protein bL12 family. Homodimer. Part of the 50S ribosomal subunit; present in 6 copies per ribosome. Forms part of the ribosomal stalk which helps the ribosome interact with GTP-bound translation factors. Forms a heptameric L10(L12)2(L12)2(L12)2 complex, where L10 forms an elongated spine to which 3 L12 dimers bind in a sequential fashion.

Forms part of the ribosomal stalk which helps the ribosome interact with GTP-bound translation factors. Is thus essential for accurate translation. This Agrobacterium fabrum (strain C58 / ATCC 33970) (Agrobacterium tumefaciens (strain C58)) protein is Large ribosomal subunit protein bL12.